A 130-amino-acid chain; its full sequence is MMPAKKTARKRRVKKHVESGVAHIHSTFNNTLVMITDVQGNAVAWSSAGALGFKGSRKSTPFAAQMAAEAAAKSAMDQGMKHVEVSVKGPGAGRESAIRSLQATGLEITAIRDVTPVPHNGSRPPKRRRV.

Belongs to the universal ribosomal protein uS11 family. As to quaternary structure, part of the 30S ribosomal subunit. Interacts with proteins S7 and S18. Binds to IF-3.

Its function is as follows. Located on the platform of the 30S subunit, it bridges several disparate RNA helices of the 16S rRNA. Forms part of the Shine-Dalgarno cleft in the 70S ribosome. This chain is Small ribosomal subunit protein uS11, found in Lactobacillus helveticus (strain DPC 4571).